The following is a 363-amino-acid chain: uncharacterized protein (363 aa).

The disordered stretch occupies residues T35–G262. Residues A56–T75 are compositionally biased toward polar residues. Residues G100–L116 show a composition bias toward low complexity.

This is an uncharacterized protein from Homo sapiens (Human).